We begin with the raw amino-acid sequence, 211 residues long: Pyridoxine/pyridoxamine 5'-phosphate oxidase (211 aa).

Residues 8–11 (RNEY) and Lys66 contribute to the substrate site. Residues 61-66 (RVVLLK), 76-77 (FT), Lys83, and Gln105 each bind FMN. Substrate contacts are provided by Tyr123, Arg127, and Ser131. FMN contacts are provided by residues 140–141 (QS) and Trp184. Residue 190–192 (RLH) coordinates substrate. Arg194 serves as a coordination point for FMN.

It belongs to the pyridoxamine 5'-phosphate oxidase family. As to quaternary structure, homodimer. Requires FMN as cofactor.

The catalysed reaction is pyridoxamine 5'-phosphate + O2 + H2O = pyridoxal 5'-phosphate + H2O2 + NH4(+). It catalyses the reaction pyridoxine 5'-phosphate + O2 = pyridoxal 5'-phosphate + H2O2. The protein operates within cofactor metabolism; pyridoxal 5'-phosphate salvage; pyridoxal 5'-phosphate from pyridoxamine 5'-phosphate: step 1/1. Its pathway is cofactor metabolism; pyridoxal 5'-phosphate salvage; pyridoxal 5'-phosphate from pyridoxine 5'-phosphate: step 1/1. Functionally, catalyzes the oxidation of either pyridoxine 5'-phosphate (PNP) or pyridoxamine 5'-phosphate (PMP) into pyridoxal 5'-phosphate (PLP). The protein is Pyridoxine/pyridoxamine 5'-phosphate oxidase of Mannheimia succiniciproducens (strain KCTC 0769BP / MBEL55E).